The primary structure comprises 362 residues: Glutamate 5-kinase (362 aa).

K3 contributes to the ATP binding site. Positions 43, 128, and 140 each coordinate substrate. Residues 160-161 and 202-208 each bind ATP; these read TD and TGGMRTK. One can recognise a PUA domain in the interval 267–348; that stretch reads AGAILVDAGA…RDIENVLGYS (82 aa).

Belongs to the glutamate 5-kinase family.

It localises to the cytoplasm. The enzyme catalyses L-glutamate + ATP = L-glutamyl 5-phosphate + ADP. It functions in the pathway amino-acid biosynthesis; L-proline biosynthesis; L-glutamate 5-semialdehyde from L-glutamate: step 1/2. In terms of biological role, catalyzes the transfer of a phosphate group to glutamate to form L-glutamate 5-phosphate. The sequence is that of Glutamate 5-kinase from Xanthomonas oryzae pv. oryzae (strain MAFF 311018).